We begin with the raw amino-acid sequence, 266 residues long: 4-hydroxy-tetrahydrodipicolinate reductase (266 aa).

NAD(+) is bound at residue glycine 10–methionine 15. Lysine 38 is a binding site for NADP(+). NAD(+) is bound by residues glycine 99–threonine 101 and alanine 125–phenylalanine 128. Histidine 155 (proton donor/acceptor) is an active-site residue. Histidine 156 contributes to the (S)-2,3,4,5-tetrahydrodipicolinate binding site. Lysine 159 acts as the Proton donor in catalysis. Glycine 165–threonine 166 provides a ligand contact to (S)-2,3,4,5-tetrahydrodipicolinate.

The protein belongs to the DapB family.

The protein localises to the cytoplasm. The enzyme catalyses (S)-2,3,4,5-tetrahydrodipicolinate + NAD(+) + H2O = (2S,4S)-4-hydroxy-2,3,4,5-tetrahydrodipicolinate + NADH + H(+). It carries out the reaction (S)-2,3,4,5-tetrahydrodipicolinate + NADP(+) + H2O = (2S,4S)-4-hydroxy-2,3,4,5-tetrahydrodipicolinate + NADPH + H(+). Its pathway is amino-acid biosynthesis; L-lysine biosynthesis via DAP pathway; (S)-tetrahydrodipicolinate from L-aspartate: step 4/4. Catalyzes the conversion of 4-hydroxy-tetrahydrodipicolinate (HTPA) to tetrahydrodipicolinate. This chain is 4-hydroxy-tetrahydrodipicolinate reductase, found in Bacillus cereus (strain ATCC 10987 / NRS 248).